The primary structure comprises 162 residues: Ribosome-binding factor A (162 aa).

The tract at residues 123–162 is disordered; that stretch reads VARVAAGASPAGDPDPYKEPRVEDADDAEVDEPSRSRQAD. The span at 125 to 136 shows a compositional bias: low complexity; sequence RVAAGASPAGDP.

It belongs to the RbfA family. Monomer. Binds 30S ribosomal subunits, but not 50S ribosomal subunits or 70S ribosomes.

The protein resides in the cytoplasm. Its function is as follows. One of several proteins that assist in the late maturation steps of the functional core of the 30S ribosomal subunit. Associates with free 30S ribosomal subunits (but not with 30S subunits that are part of 70S ribosomes or polysomes). Required for efficient processing of 16S rRNA. May interact with the 5'-terminal helix region of 16S rRNA. The protein is Ribosome-binding factor A of Rhodococcus opacus (strain B4).